The primary structure comprises 138 residues: MKFTTLLFLAAVAGALVYAEDASSDSTGADPAQEAGTSKPNEEISGPAEPASPPETTTTAQETSAAAVQGTAKVTSSRQELNPLKSIVEKSILLTEQALAKAGKGMHGGVPGGKQFIENGSEFAQKLLKKFSLLKPWA.

Positions 1-19 are cleaved as a signal peptide; the sequence is MKFTTLLFLAAVAGALVYA. The segment at 20 to 79 is disordered; it reads EDASSDSTGADPAQEAGTSKPNEEISGPAEPASPPETTTTAQETSAAAVQGTAKVTSSRQ. Positions 43–67 are enriched in low complexity; the sequence is EISGPAEPASPPETTTTAQETSAAA. N-linked (GlcNAc...) asparagine glycosylation is present at N119.

Expressed in secretory granules of many acinar cells in lacrimal gland and in scattered acinar cells of salivary glands.

The protein localises to the secreted. Modulates secretion by lacrimal acinar cells. This Homo sapiens (Human) protein is Extracellular glycoprotein lacritin (LACRT).